Consider the following 532-residue polypeptide: uncharacterized protein (532 aa).

The next 6 helical transmembrane spans lie at 7-26 (HSSYFSLFLIVALGFMLGRI), 30-52 (GLSLDVSAVIFIALLFGHFGVII), 59-77 (FGLVLFIFTIGIQAGPGFF), 87-109 (LILITMLIICSACLTAVGLKYAF), 116-134 (VVGLIAGALTSTPGLAVAI), and 139-161 (SPLASIAYGIAYPFGVIGVILFV). 2 RCK C-terminal domains span residues 179 to 262 (LEIE…LIGE) and 263 to 346 (REEG…LLGN). 6 consecutive transmembrane segments (helical) span residues 356 to 376 (FFPIAMGIVLGVLFGKLNISF), 386 to 408 (LTGGVLMVALVLSAVGKTGPIIW), 421 to 440 (LGLLLFLAEVGTSAGKNLVA), 445 to 467 (SGLLMFGVGAAITVVPMLVAVIV), 474 to 496 (INILDLLGTITGGMTSTPGLAAA), and 506 to 528 (SVAYATVYPIAMVFLILFIQVIS).

It belongs to the AAE transporter (TC 2.A.81) family.

It is found in the cell membrane. This is an uncharacterized protein from Bacteroides thetaiotaomicron (strain ATCC 29148 / DSM 2079 / JCM 5827 / CCUG 10774 / NCTC 10582 / VPI-5482 / E50).